A 338-amino-acid polypeptide reads, in one-letter code: Serpentine receptor class alpha-31 (338 aa).

A run of 7 helical transmembrane segments spans residues 23-43 (GNHC…VFAI), 59-79 (LLFS…GIRI), 108-125 (LYYY…SLFF), 142-162 (FSKI…YWIF), 188-208 (VNEF…VIFF), 240-260 (VCII…TTEI), and 276-296 (SIAF…IIIY).

Belongs to the nematode receptor-like protein sra family.

The protein localises to the membrane. The polypeptide is Serpentine receptor class alpha-31 (sra-31) (Caenorhabditis elegans).